Here is a 114-residue protein sequence, read N- to C-terminus: MEIVNKQSFQDVLEYVRMYRLKNRIKRDMEDNNRKIRDNQKRILLLDNLNQYIRDDMTIAEVRGIIESMRDDYESRVDDYTIRNAELSKQRREASTKMKEQKKAHAELLKNAEK.

Positions 70-111 form a coiled coil; the sequence is RDDYESRVDDYTIRNAELSKQRREASTKMKEQKKAHAELLKN. The disordered stretch occupies residues 89–114; the sequence is KQRREASTKMKEQKKAHAELLKNAEK.

The protein belongs to the pole-localizer TmaR family.

The protein resides in the cytoplasm. Its function is as follows. Pole-localizer protein involved in the regulation of several cellular processes. The polypeptide is Pole-localizer protein TmaR (Haemophilus influenzae (strain PittEE)).